A 98-amino-acid polypeptide reads, in one-letter code: MMIKQETIGYMTLKSDAAKIEALLTKQFDALCLSQCPIIEEIIDTQLFGFTKEVDFAKRVRLISDQEGSQLVNELETRINQLYLEIYQTQAQNEVHRN.

It belongs to the UPF0358 family.

This is UPF0358 protein LCA_1078 from Latilactobacillus sakei subsp. sakei (strain 23K) (Lactobacillus sakei subsp. sakei).